Consider the following 398-residue polypeptide: Probable beta-1,3-galactosyltransferase 5 (398 aa).

The chain crosses the membrane as a helical; Signal-anchor for type II membrane protein span at residues 11 to 31 (LTMTWVPLLCISCFFLGAIFT). Residues N110, N115, and N206 are each glycosylated (N-linked (GlcNAc...) asparagine).

The protein belongs to the glycosyltransferase 31 family. Requires Mn(2+) as cofactor.

The protein resides in the golgi apparatus membrane. It participates in protein modification; protein glycosylation. In terms of biological role, beta-1,3-galactosyltransferase that transfers galactose from UDP-galactose to substrates with a terminal glycosyl residue. This is Probable beta-1,3-galactosyltransferase 5 (B3GALT5) from Arabidopsis thaliana (Mouse-ear cress).